We begin with the raw amino-acid sequence, 72 residues long: uncharacterized protein (72 aa).

This is an uncharacterized protein from Schizosaccharomyces pombe (strain 972 / ATCC 24843) (Fission yeast).